Here is a 180-residue protein sequence, read N- to C-terminus: DNA-directed RNA polymerase subunit omega (180 aa).

Residues 100 to 180 (ISKSGTPILP…NSDDSETTNS (81 aa)) form a disordered region. Composition is skewed to acidic residues over residues 137-151 (EVDV…DEET) and 159-180 (AEAE…TTNS).

Belongs to the RNA polymerase subunit omega family. The RNAP catalytic core consists of 2 alpha, 1 beta, 1 beta' and 1 omega subunit. When a sigma factor is associated with the core the holoenzyme is formed, which can initiate transcription.

It carries out the reaction RNA(n) + a ribonucleoside 5'-triphosphate = RNA(n+1) + diphosphate. Its function is as follows. Promotes RNA polymerase assembly. Latches the N- and C-terminal regions of the beta' subunit thereby facilitating its interaction with the beta and alpha subunits. The sequence is that of DNA-directed RNA polymerase subunit omega from Pelagibacter ubique (strain HTCC1062).